Here is an 840-residue protein sequence, read N- to C-terminus: Cytosolic carboxypeptidase 2 (840 aa).

Residues 358–628 (YPYTYTDLQC…HVCDTLLDFC (271 aa)) enclose the Peptidase M14 domain. Positions 424, 427, and 520 each coordinate Zn(2+). Glu592 (proton donor/acceptor) is an active-site residue. Residues 706–719 (MFKKKKKKSLQTRK) are compositionally biased toward basic residues. Disordered regions lie at residues 706–726 (MFKK…EQYQ) and 758–789 (ESSS…LDPS).

This sequence belongs to the peptidase M14 family. Interacts with RARRES1, KIF11 and MAPRE1. Zn(2+) serves as cofactor.

It is found in the cytoplasm. The protein localises to the cytosol. The protein resides in the cytoskeleton. Its subcellular location is the microtubule organizing center. It localises to the centrosome. It is found in the centriole. The protein localises to the cilium basal body. It catalyses the reaction (L-glutamyl)(n+1)-gamma-L-glutamyl-L-glutamyl-[protein] + H2O = (L-glutamyl)(n)-gamma-L-glutamyl-L-glutamyl-[protein] + L-glutamate. Its activity is regulated as follows. Inhibited by RARRES1. In terms of biological role, metallocarboxypeptidase that mediates deglutamylation of tubulin and non-tubulin target proteins. Catalyzes the removal of polyglutamate side chains present on the gamma-carboxyl group of glutamate residues within the C-terminal tail of tubulin protein. Specifically cleaves tubulin long-side-chains, while it is not able to remove the branching point glutamate. Also catalyzes the removal of polyglutamate residues from the carboxy-terminus of non-tubulin proteins such as MYLK. This chain is Cytosolic carboxypeptidase 2 (AGBL2), found in Macaca fascicularis (Crab-eating macaque).